Reading from the N-terminus, the 630-residue chain is MAAGVAAWLPFARAAAIGWMPVASGPMPAPPRQERKRTQDALIVLNVSGTRFQTWQDTLERYPDTLLGSSERDFFYHPETQQYFFDRDPDIFRHILNFYRTGKLHYPRHECISAYDEELAFFGLIPEIIGDCCYEEYKDRRRENAERLQDDADTDNTGESALPTMTARQRVWRAFENPHTSTMALVFYYVTGFFIAVSVIANVVETVPCGSSPGHIKELPCGERYAVAFFCLDTACVMIFTVEYLLRLAAAPSRYRFVRSVMSIIDVVAILPYYIGLVMTDNEDVSGAFVTLRVFRVFRIFKFSRHSQGLRILGYTLKSCASELGFLLFSLTMAIIIFATVMFYAEKGSSASKFTSIPAAFWYTIVTMTTLGYGDMVPKTIAGKIFGSICSLSGVLVIALPVPVIVSNFSRIYHQNQRADKRRAQKKARLARIRAAKSGSANAYMQSKRNGLLSNQLQSSEDEPAFVSKSGSSFETQHHHLLHCLEKTTNHEFVDEQVFEESCMEVATVNRPSSHSPSLSSQQGVTSTCCSRRHKKSFRIPNANVSGSHRGSVQELSTIQIRCVERTPLSNSRSSLNAKMEECVKLNCEQPYVTTAIISIPTPPVTTPEGDDRPESPEYSGGNIVRVSAL.

Residues 1-184 lie on the Cytoplasmic side of the membrane; sequence MAAGVAAWLP…FENPHTSTMA (184 aa). The interaction with KCNIP1, KCNIP2, and other family members stretch occupies residues 2 to 20; that stretch reads AAGVAAWLPFARAAAIGWM. Thr-38 is subject to Phosphothreonine. Positions 71–90 are interaction with KCNIP1; the sequence is ERDFFYHPETQQYFFDRDPD. Zn(2+) is bound by residues His-105, Cys-111, Cys-132, and Cys-133. A helical membrane pass occupies residues 185 to 206; the sequence is LVFYYVTGFFIAVSVIANVVET. The Extracellular segment spans residues 207–226; sequence VPCGSSPGHIKELPCGERYA. Residues 227 to 249 traverse the membrane as a helical segment; the sequence is VAFFCLDTACVMIFTVEYLLRLA. The Cytoplasmic portion of the chain corresponds to 250–256; sequence AAPSRYR. Residues 257–281 form a helical membrane-spanning segment; sequence FVRSVMSIIDVVAILPYYIGLVMTD. Topologically, residues 282–287 are extracellular; sequence NEDVSG. The chain crosses the membrane as a helical; Voltage-sensor span at residues 288 to 307; it reads AFVTLRVFRVFRIFKFSRHS. The Cytoplasmic portion of the chain corresponds to 308-321; sequence QGLRILGYTLKSCA. Residues 308-321 are S4-S5 linker; the sequence is QGLRILGYTLKSCA. A helical transmembrane segment spans residues 322–345; sequence SELGFLLFSLTMAIIIFATVMFYA. At 346–357 the chain is on the extracellular side; the sequence is EKGSSASKFTSI. An intramembrane region (helical) is located at residues 358–369; the sequence is PAAFWYTIVTMT. The K(+) site is built by Thr-370, Leu-371, Gly-372, and Tyr-373. The Selectivity filter signature appears at 370–375; sequence TLGYGD. The stretch at 370-377 is an intramembrane region; sequence TLGYGDMV. The Extracellular portion of the chain corresponds to 378–380; it reads PKT. Residues 381–403 traverse the membrane as a helical segment; that stretch reads IAGKIFGSICSLSGVLVIALPVP. Residues 404–630 are Cytoplasmic-facing; that stretch reads VIVSNFSRIY…GGNIVRVSAL (227 aa). Ser-438 is modified (phosphoserine). The interval 474-489 is required for dendritic targeting; it reads FETQHHHLLHCLEKTT. The important for normal channel activation and inactivation, for interaction with KCNIP2, and probably other family members as well stretch occupies residues 474-630; it reads FETQHHHLLH…GGNIVRVSAL (157 aa). Phosphoserine occurs at positions 548, 552, 572, and 575. Residues 600–623 are disordered; the sequence is IPTPPVTTPEGDDRPESPEYSGGN. Residues Thr-602 and Thr-607 each carry the phosphothreonine modification. Ser-616 carries the phosphoserine modification. The PDZ-binding motif lies at 627 to 630; sequence VSAL.

This sequence belongs to the potassium channel family. D (Shal) (TC 1.A.1.2) subfamily. Kv4.2/KCND2 sub-subfamily. As to quaternary structure, homotetramer or heterotetramer with KCND1 or KCND3. Associates with the regulatory subunits KCNIP2, KCNIP3 and KCNIP4. Interacts with the regulatory subunit KCNIP1; this interaction mediates the capture of both the N- and C-terminus of KCND2, preventing N-type inactivation and stabilizing the S6 conformation, thereby accelerating closed state inactivation and recovery. Interacts with DPP10, DLG4 and DLG1. In vivo, probably exists as heteromeric complex containing variable proportions of KCND1, KCND2, KCND3, KCNIP1, KCNIP2, KCNIP3, KCNIP4, DPP6 and DPP10. The tetrameric channel can associate with up to four regulatory subunits, such as KCNIP2 or KCNIP4. Interaction with KCNIP3 promotes tetramerization and formation of a functional potassium channel. Interaction with four KCNIP4 chains does not reduce interaction with DPP10. Probably part of a complex consisting of KCNIP1, KCNIP2 isoform 3 and KCND2. Interacts with FLNA and FLNC. Interacts with NCS1/FREQ. Identified in a complex with cAMP-dependent protein kinase (PKA), CAV3, AKAP6 and KCND3 in cardiac myocytes. Interacts (via S1 and S2 helices) with DPP6; this interaction stabilizes the conformation of the S1-S2 helices and facilitates S4 conformational change, including S4 sliding up and down, thereby accelerating activation, inactivation, and recovery. In terms of processing, phosphorylation at Ser-438 in response to MAPK activation is increased in stimulated dendrites. Interaction with KCNIP2 and DPP6 propomtes phosphorylation by PKA at Ser-552. Phosphorylation at Ser-552 has no effect on interaction with KCNIP3, but is required for the regulation of channel activity by KCNIP3. Phosphorylation at Ser-552 leads to KCND2 internalization. Phosphorylated by MAPK in response to signaling via the metabotropic glutamate receptor GRM5. Phosphorylation at Ser-616 is required for the down-regulation of neuronal A-type currents in response to signaling via GRM5. Detected in brain cortex, hippocampus, dentate gyrus, thalamus and cerebellum. Detected in neurons from the primary visual cortex. Detected in the supraoptic nucleus in hypothalamus, in hippocampus and the habenular nucleus of the thalamus. Detected in the bed nucleus of the stria terminalis. Detected in dendritic fields in the hippocampus CA1 layer, in stratum radiatum, stratum oriens, stratum lacunosum-moleculare and stratum pyramidale. Detected in dendritic fields in the hippocampus CA3 layer and in dentate gyrus. Detected in the cerebellum granule cell layer, where it localizes at synapses. Detected in the main olfactory bulb, especially in the granule cell layer and the external plexiform layer, but also the mitral layer. Detected in heart atrium and ventricle. Detected in heart left ventricle (at protein level). Highly expressed in heart and throughout the brain, with similar levels in cortex and hypothalamus, and much higher levels in hippocampus, dentate gyrus and the habenular nucleus of the thalamus. Detected in brain, and at lower levels in heart atrium and ventricle. Detected in neurons from the bed nucleus of the stria terminalis. Detected in aorta, cardiac and smooth muscle.

It localises to the cell membrane. The protein localises to the cell projection. Its subcellular location is the dendrite. It is found in the synapse. The protein resides in the perikaryon. It localises to the postsynaptic cell membrane. The protein localises to the dendritic spine. Its subcellular location is the sarcolemma. It is found in the cell junction. The protein resides in the membrane. It localises to the caveola. It carries out the reaction K(+)(in) = K(+)(out). Its activity is regulated as follows. Inhibited by 5 mM 4-aminopyridine (4-AP). Not inhibited by dendrotoxins and by tetraethylammonium (TEA). Inhibited by 10 mM flecainide and 20 mM quinidine. Inhibited by the heteropodatoxins HpTx(1), HpTx(2), and HpTx(3). In terms of biological role, voltage-gated potassium channel that mediates transmembrane potassium transport in excitable membranes, primarily in the brain, but also in rodent heart. Mediates the major part of the dendritic A-type current I(SA) in brain neurons. This current is activated at membrane potentials that are below the threshold for action potentials. It regulates neuronal excitability, prolongs the latency before the first spike in a series of action potentials, regulates the frequency of repetitive action potential firing, shortens the duration of action potentials and regulates the back-propagation of action potentials from the neuronal cell body to the dendrites. Contributes to the regulation of the circadian rhythm of action potential firing in suprachiasmatic nucleus neurons, which regulates the circadian rhythm of locomotor activity. Functions downstream of the metabotropic glutamate receptor GRM5 and plays a role in neuronal excitability and in nociception mediated by activation of GRM5. Mediates the transient outward current I(to) in rodent heart left ventricle apex cells, but not in human heart, where this current is mediated by another family member. Forms tetrameric potassium-selective channels through which potassium ions pass in accordance with their electrochemical gradient. The channel alternates between opened and closed conformations in response to the voltage difference across the membrane. Can form functional homotetrameric channels and heterotetrameric channels that contain variable proportions of KCND2 and KCND3; channel properties depend on the type of pore-forming alpha subunits that are part of the channel. In vivo, membranes probably contain a mixture of heteromeric potassium channel complexes. Interaction with specific isoforms of the regulatory subunits KCNIP1, KCNIP2, KCNIP3 or KCNIP4 strongly increases expression at the cell surface and thereby increases channel activity; it modulates the kinetics of channel activation and inactivation, shifts the threshold for channel activation to more negative voltage values, shifts the threshold for inactivation to less negative voltages and accelerates recovery after inactivation. Likewise, interaction with DPP6 or DPP10 promotes expression at the cell membrane and regulates both channel characteristics and activity. Upon depolarization, the channel goes from a resting closed state (C state) to an activated but non-conducting state (C* state), from there, the channel may either inactivate (I state) or open (O state). The polypeptide is A-type voltage-gated potassium channel KCND2 (Rattus norvegicus (Rat)).